The primary structure comprises 389 residues: Aspartyl protease UND (389 aa).

Residues 1-19 (MKTTMNFVFLFFLPLLINA) form the signal peptide. The region spanning 58–383 (FMAEIHFGSP…DLSAKTAYIN (326 aa)) is the Peptidase A1 domain. Residue Asp-76 is part of the active site. Cys-86 and Cys-92 are oxidised to a cystine. Residue Asn-238 is glycosylated (N-linked (GlcNAc...) asparagine). Residue Asp-268 is part of the active site. A disulfide bond links Cys-304 and Cys-346.

It belongs to the peptidase A1 family.

Probable aspartic protease activated by the transcription factor MYB80. May participate in the regulation of the timing of tapetal programmed cell death (PCD) which is critical for pollen development. This Arabidopsis thaliana (Mouse-ear cress) protein is Aspartyl protease UND.